The primary structure comprises 160 residues: ATP synthase subunit b 3 (160 aa).

The helical transmembrane segment at 5–25 (PTFWVLVAFVLFVAAVWRIAA) threads the bilayer.

The protein belongs to the ATPase B chain family. In terms of assembly, F-type ATPases have 2 components, F(1) - the catalytic core - and F(0) - the membrane proton channel. F(1) has five subunits: alpha(3), beta(3), gamma(1), delta(1), epsilon(1). F(0) has three main subunits: a(1), b(2) and c(10-14). The alpha and beta chains form an alternating ring which encloses part of the gamma chain. F(1) is attached to F(0) by a central stalk formed by the gamma and epsilon chains, while a peripheral stalk is formed by the delta and b chains.

It localises to the cell inner membrane. Its function is as follows. F(1)F(0) ATP synthase produces ATP from ADP in the presence of a proton or sodium gradient. F-type ATPases consist of two structural domains, F(1) containing the extramembraneous catalytic core and F(0) containing the membrane proton channel, linked together by a central stalk and a peripheral stalk. During catalysis, ATP synthesis in the catalytic domain of F(1) is coupled via a rotary mechanism of the central stalk subunits to proton translocation. Component of the F(0) channel, it forms part of the peripheral stalk, linking F(1) to F(0). This is ATP synthase subunit b 3 from Rhodospirillum centenum (strain ATCC 51521 / SW).